Here is a 173-residue protein sequence, read N- to C-terminus: 3-isopropylmalate dehydratase small subunit (173 aa).

It belongs to the LeuD family. LeuD type 2 subfamily. In terms of assembly, heterodimer of LeuC and LeuD.

The enzyme catalyses (2R,3S)-3-isopropylmalate = (2S)-2-isopropylmalate. Its pathway is amino-acid biosynthesis; L-leucine biosynthesis; L-leucine from 3-methyl-2-oxobutanoate: step 2/4. Catalyzes the isomerization between 2-isopropylmalate and 3-isopropylmalate, via the formation of 2-isopropylmaleate. The protein is 3-isopropylmalate dehydratase small subunit of Caldicellulosiruptor saccharolyticus (strain ATCC 43494 / DSM 8903 / Tp8T 6331).